A 338-amino-acid polypeptide reads, in one-letter code: DNA-directed RNA polymerase subunit alpha (338 aa).

Positions 1-234 (MIHKNWAELI…DQLSIFVNFE (234 aa)) are alpha N-terminal domain (alpha-NTD). The segment at 250 to 338 (FNPLLLKKVD…DLAKRFEDQF (89 aa)) is alpha C-terminal domain (alpha-CTD).

It belongs to the RNA polymerase alpha chain family. In terms of assembly, homodimer. The RNAP catalytic core consists of 2 alpha, 1 beta, 1 beta' and 1 omega subunit. When a sigma factor is associated with the core the holoenzyme is formed, which can initiate transcription.

The enzyme catalyses RNA(n) + a ribonucleoside 5'-triphosphate = RNA(n+1) + diphosphate. DNA-dependent RNA polymerase catalyzes the transcription of DNA into RNA using the four ribonucleoside triphosphates as substrates. This chain is DNA-directed RNA polymerase subunit alpha, found in Cereibacter sphaeroides (strain ATCC 17025 / ATH 2.4.3) (Rhodobacter sphaeroides).